A 208-amino-acid chain; its full sequence is Ribosome maturation factor RimP (208 aa).

Belongs to the RimP family.

It is found in the cytoplasm. Required for maturation of 30S ribosomal subunits. This is Ribosome maturation factor RimP from Bartonella tribocorum (strain CIP 105476 / IBS 506).